The chain runs to 96 residues: Large ribosomal subunit protein eL43 (96 aa).

A C4-type zinc finger spans residues 41-62 (CPVCAFPKLKRVGTSIWVCDKC).

Belongs to the eukaryotic ribosomal protein eL43 family. Zn(2+) is required as a cofactor.

This is Large ribosomal subunit protein eL43 from Methanococcus maripaludis (strain C6 / ATCC BAA-1332).